We begin with the raw amino-acid sequence, 537 residues long: Methylmalonate-semialdehyde/malonate-semialdehyde dehydrogenase [acylating], mitochondrial (537 aa).

A mitochondrion-targeting transit peptide spans 1 to 34 (MAAVAVAAAAAALRARILQVSSKVNSSWQPASSF). N6-acetyllysine; alternate occurs at positions 49, 54, 57, and 78. K49, K54, K57, and K78 each carry N6-succinyllysine; alternate. K89 is subject to N6-acetyllysine. K119 and K131 each carry N6-acetyllysine; alternate. 2 positions are modified to N6-succinyllysine; alternate: K119 and K131. The NAD(+) site is built by A185, F187, K211, E214, R215, and S264. A Phosphoserine modification is found at S264. K300 bears the N6-acetyllysine mark. C319 (nucleophile) is an active-site residue. N6-acetyllysine occurs at positions 332 and 333. Residues K366 and K378 each carry the N6-acetyllysine; alternate modification. K366 and K378 each carry N6-succinyllysine; alternate. The residue at position 382 (S382) is a Phosphoserine. K393 is modified (N6-succinyllysine). E419 is a binding site for NAD(+). N6-acetyllysine is present on K502. Residue K519 is modified to N6-succinyllysine.

Belongs to the aldehyde dehydrogenase family. As to quaternary structure, homodimer. In terms of processing, the N-terminus is blocked.

Its subcellular location is the mitochondrion. It carries out the reaction 2-methyl-3-oxopropanoate + NAD(+) + CoA + H2O = propanoyl-CoA + hydrogencarbonate + NADH + H(+). The catalysed reaction is 3-oxopropanoate + NAD(+) + CoA + H2O = hydrogencarbonate + acetyl-CoA + NADH + H(+). It catalyses the reaction (R)-2-methyl-3-oxopropanoate + NAD(+) + CoA + H2O = propanoyl-CoA + hydrogencarbonate + NADH + H(+). The enzyme catalyses (S)-2-methyl-3-oxopropanoate + NAD(+) + CoA + H2O = propanoyl-CoA + hydrogencarbonate + NADH + H(+). In terms of biological role, malonate and methylmalonate semialdehyde dehydrogenase involved in the catabolism of valine, thymine, and compounds catabolized by way of beta-alanine, including uracil and cytidine. The chain is Methylmalonate-semialdehyde/malonate-semialdehyde dehydrogenase [acylating], mitochondrial (ALDH6A1) from Bos taurus (Bovine).